The sequence spans 167 residues: MATSELSCQVSEENQERREAFWAEWKDLTLSTRPEEGCSLHEEDTQRHETYHRQGQCQAVVQRSPWLVMRLGILGRGLQEYQLPYQRVLPLPIFTPTKVGASKEEREETPIQLRELLALETALGGQCVERQDVAEITKQLPPVVPVSKPGPLRRTLSRSMSQEAQRG.

The residue at position 39 (serine 39) is a Phosphoserine. The disordered stretch occupies residues 142 to 167 (PVVPVSKPGPLRRTLSRSMSQEAQRG). Polar residues predominate over residues 157–167 (SRSMSQEAQRG).

As to quaternary structure, interacts with MYOZ1, MYOZ2 and MYOZ3. Interacts with CSRP3. Interacts directly with the N-terminal Ig-like domains of 2 titin (TTN) molecules. Interacts with ANKRD2; the interaction is direct.

Its subcellular location is the cytoplasm. The protein resides in the myofibril. It localises to the sarcomere. In terms of biological role, muscle assembly regulating factor. Mediates the antiparallel assembly of titin (TTN) molecules at the sarcomeric Z-disk. This Mus musculus (Mouse) protein is Telethonin (Tcap).